The primary structure comprises 600 residues: NADH-quinone oxidoreductase subunit C/D (600 aa).

The interval 1–190 (MVNNMTDLTA…SPFELTKAKQ (190 aa)) is NADH dehydrogenase I subunit C. The interval 214 to 600 (DFMFLNLGPN…IDFVMSDVDR (387 aa)) is NADH dehydrogenase I subunit D.

The protein in the N-terminal section; belongs to the complex I 30 kDa subunit family. This sequence in the C-terminal section; belongs to the complex I 49 kDa subunit family. NDH-1 is composed of 13 different subunits. Subunits NuoB, CD, E, F, and G constitute the peripheral sector of the complex.

The protein localises to the cell inner membrane. It catalyses the reaction a quinone + NADH + 5 H(+)(in) = a quinol + NAD(+) + 4 H(+)(out). Its function is as follows. NDH-1 shuttles electrons from NADH, via FMN and iron-sulfur (Fe-S) centers, to quinones in the respiratory chain. The immediate electron acceptor for the enzyme in this species is believed to be ubiquinone. Couples the redox reaction to proton translocation (for every two electrons transferred, four hydrogen ions are translocated across the cytoplasmic membrane), and thus conserves the redox energy in a proton gradient. In Escherichia coli O127:H6 (strain E2348/69 / EPEC), this protein is NADH-quinone oxidoreductase subunit C/D.